A 374-amino-acid chain; its full sequence is Tomoregulin-2 (374 aa).

The signal sequence occupies residues 1-40 (MVLWESPRQCSSWTLCEGFCWLLLLPVTLLIIARPVKLAA). Over 41 to 320 (FPTSLSDCQT…VPGPVRFQYV (280 aa)) the chain is Extracellular. An N-linked (GlcNAc...) asparagine glycan is attached at Asn55. Kazal-like domains are found at residues 90-137 (VCQF…SCAT) and 181-229 (VCNI…RCQD). Cystine bridges form between Cys91–Cys121, Cys95–Cys114, Cys103–Cys135, Cys182–Cys213, Cys186–Cys206, and Cys195–Cys227. Asn230 carries N-linked (GlcNAc...) asparagine glycosylation. One can recognise an EGF-like domain in the interval 261–301 (HHIPCPEHYNGFCMHGKCEHSINMQEPSCRCDAGYTGQHCE). 3 cysteine pairs are disulfide-bonded: Cys265–Cys278, Cys273–Cys289, and Cys291–Cys300. Residues 303–320 (KDYSVLYVVPGPVRFQYV) are required for shedding. The helical transmembrane segment at 321–341 (LIAAVIGTIQIAVICVVVLCI) threads the bilayer. Over 342-374 (TRKCPRSNRIHRQKQNTGHYSSDNTTRASTRLI) the chain is Cytoplasmic. Residues 353-374 (RQKQNTGHYSSDNTTRASTRLI) form a disordered region. The segment covering 356 to 374 (QNTGHYSSDNTTRASTRLI) has biased composition (polar residues).

This sequence belongs to the tomoregulin family. O-glycosylated; contains chondroitin sulfate glycosaminoglycans. Post-translationally, a soluble form (TMEFF2-ECD) is produced by proteolytic shedding. This shedding can be induced by phorbol ester or pro-inflammatory cytokines such as TNFalpha, and is mediated by a metalloproteinase ADAM. As to expression, widely expressed in the brain. In the olfactory bulb expressed in mitral cell, granule, and glomerular layers. In the hippocampus expressed in hippocampal cornu ammonis, pyramidal layer, dentate gyrus, and substantia nigra pars compacta.

It is found in the membrane. May be a survival factor for hippocampal and mesencephalic neurons. The shedded form may up-regulate cell proliferation. This chain is Tomoregulin-2 (Tmeff2), found in Mus musculus (Mouse).